The following is a 255-amino-acid chain: Acetylglutamate kinase (255 aa).

Residues 40 to 41 (GG), Arg62, and Asn153 contribute to the substrate site.

Belongs to the acetylglutamate kinase family. ArgB subfamily.

It localises to the cytoplasm. It carries out the reaction N-acetyl-L-glutamate + ATP = N-acetyl-L-glutamyl 5-phosphate + ADP. It participates in amino-acid biosynthesis; L-arginine biosynthesis; N(2)-acetyl-L-ornithine from L-glutamate: step 2/4. Its function is as follows. Catalyzes the ATP-dependent phosphorylation of N-acetyl-L-glutamate. The polypeptide is Acetylglutamate kinase (Bacillus cereus (strain AH820)).